Consider the following 158-residue polypeptide: Transcription elongation factor GreA (158 aa).

Residues 48–74 (EYDAAKNRQGFIEGRIKELNDKIARAE) are a coiled coil.

It belongs to the GreA/GreB family.

In terms of biological role, necessary for efficient RNA polymerase transcription elongation past template-encoded arresting sites. The arresting sites in DNA have the property of trapping a certain fraction of elongating RNA polymerases that pass through, resulting in locked ternary complexes. Cleavage of the nascent transcript by cleavage factors such as GreA or GreB allows the resumption of elongation from the new 3'terminus. GreA releases sequences of 2 to 3 nucleotides. The sequence is that of Transcription elongation factor GreA from Syntrophotalea carbinolica (strain DSM 2380 / NBRC 103641 / GraBd1) (Pelobacter carbinolicus).